Reading from the N-terminus, the 1207-residue chain is Brassinosteroid LRR receptor kinase (1207 aa).

Residues 1–34 (MKAHKTVFNQHPLSLNKLFFVLLLIFFLPPASPA) form the signal peptide. Positions 71–78 (CSFTGVSC) match the Cys pair 1 motif. LRR repeat units lie at residues 109–131 (NLESLVLKNANLSGSLTSAAKSQ), 135–157 (TLDSIDLAENTISGPISDISSFG), 161–181 (NLKSLNLSKNFLDPPGKEMLK), 186–207 (SLQVLDLSYNNISGFNLFPWVS), 213–234 (ELEFFSLKGNKLAGSIPELDFK), 235–257 (NLSYLDLSANNFSTVFPSFKDCS), 258–280 (NLQHLDLSSNKFYGDIGSSLSSC), 282–304 (KLSFLNLTNNQFVGLVPKLPSES), 305–325 (LQYLYLRGNDFQGVYPNQLAD), 329–350 (TVVELDLSYNNFSGMVPESLGE), 353–374 (SLELVDISYNNFSGKLPVDTLS), 378–400 (NIKTMVLSFNKFVGGLPDSFSNL), 402–423 (KLETLDMSSNNLTGVIPSGICK), 428–450 (NLKVLYLQNNLFKGPIPDSLSNC), 452–474 (QLVSLDLSFNYLTGSIPSSLGSL), 476–499 (KLKDLILWLNQLSGEIPQELMYLQ), 500–523 (ALENLILDFNDLTGPIPASLSNCT), 524–547 (KLNWISLSNNQLSGEIPASLGRLS), 548–570 (NLAILKLGNNSISGNIPAELGNC), and 572–594 (SLIWLDLNTNFLNGSIPPPLFKQ). Asn119 carries N-linked (GlcNAc...) asparagine glycosylation. N-linked (GlcNAc...) asparagine glycosylation is found at Asn166 and Asn196. 2 N-linked (GlcNAc...) asparagine glycosylation sites follow: Asn235 and Asn245. N-linked (GlcNAc...) asparagine glycosylation is present at Asn287. 2 N-linked (GlcNAc...) asparagine glycosylation sites follow: Asn339 and Asn363. 2 N-linked (GlcNAc...) asparagine glycosylation sites follow: Asn412 and Asn449. Residue Asn521 is glycosylated (N-linked (GlcNAc...) asparagine). N-linked (GlcNAc...) asparagine glycosylation is found at Asn556, Asn584, Asn646, and Asn662. LRR repeat units follow at residues 664-686 (SMIFLDLSYNKLEGSIPKELGAM), 688-711 (YLSILNLGHNDLSGMIPQQLGGLK), 712-735 (NVAILDLSYNRFNGTIPNSLTSLT), and 736-758 (LLGEIDLSNNNLSGMIPESAPFD). 3 N-linked (GlcNAc...) asparagine glycosylation sites follow: Asn724, Asn746, and Asn767. A Cys pair 2 motif is present at residues 771 to 779 (CGYPLPIPC). Residues 803–823 (SVAMGLLFSLFCIFGLIIVAI) traverse the membrane as a helical segment. The Protein kinase domain maps to 888–1163 (FHNDSLVGSG…IQVMAMFKEI (276 aa)). Residues 894–902 (VGSGGFGDV) and Lys916 each bind ATP. Catalysis depends on Asp1014, which acts as the Proton acceptor.

Belongs to the protein kinase superfamily. Ser/Thr protein kinase family.

The protein resides in the cell membrane. The enzyme catalyses L-seryl-[protein] + ATP = O-phospho-L-seryl-[protein] + ADP + H(+). It catalyses the reaction L-threonyl-[protein] + ATP = O-phospho-L-threonyl-[protein] + ADP + H(+). In terms of biological role, receptor with a serine/threonine-protein kinase activity. Regulates, in response to brassinosteroid binding, a signaling cascade involved in plant development, including expression of light- and stress-regulated genes, promotion of cell elongation, normal leaf and chloroplast senescence, and flowering. May be involved in a feedback regulation of brassinosteroid biosynthesis. May be also involved in the perception of systemin, a peptide hormone responsible for the systemic activation of defense genes in leaves of wounded plants. The protein is Brassinosteroid LRR receptor kinase (CURL3) of Solanum lycopersicum (Tomato).